The sequence spans 433 residues: Pyroglutamylated RF-amide peptide receptor (433 aa).

Topologically, residues 1–46 (MQALNITAEQFSRLLSAHNLTREQFIHRYGLRPLVYTPELPARAKL) are extracellular. N-linked (GlcNAc...) asparagine glycosylation is found at Asn-5 and Asn-19. The helical transmembrane segment at 47–67 (AFALAGALIFALALFGNSLVI) threads the bilayer. Over 68–81 (YVVTRSKAMRTVTN) the chain is Cytoplasmic. The helical transmembrane segment at 82-102 (IFICSLALSDLLIAFFCIPVT) threads the bilayer. Residues 103 to 120 (MLQNISDKWLGGAFICKM) lie on the Extracellular side of the membrane. The helical transmembrane segment at 121–141 (VPFVQSTAVVTEILTMTCIAV) threads the bilayer. Residues 142–162 (ERHQGLIHPFKMKWQYTTRRA) are Cytoplasmic-facing. A helical transmembrane segment spans residues 163–183 (FTILGVVWLAAIIVGSPMWHV). Topologically, residues 184–212 (QRLEIKYDFLYEKEHVCCLEEWASPMHQR) are extracellular. Residues 213–233 (IYTTFILVILFLLPLVVMLVL) traverse the membrane as a helical segment. Residues 234–271 (YSKIGYELWIKKRVGDSSALQTIHGKEMSKIARKKKRA) are Cytoplasmic-facing. A helical membrane pass occupies residues 272–292 (VVMMVTVVALFAACWAPFHVV). At 293–313 (HMMVEYSNFEKEYDDVTIKMV) the chain is on the extracellular side. A helical membrane pass occupies residues 314–334 (FAVAQTIGFFNSICNPFVYAF). The Cytoplasmic segment spans residues 335 to 433 (MNENFKKNFL…NSTFGSGHEL (99 aa)).

Belongs to the G-protein coupled receptor 1 family. In terms of tissue distribution, expressed widely in the brain with high levels in the cortex and hypothalamus, and moderate levels in the brain stem, caudate nucleus, midbrain hippocampus, thalamus, trigeminal ganglia and spinal cord. Particularly strong expression detected in the mitral cell layer of the olfactory bulb, accessory olfactory bulb, island of Calleja and nucleus of the solitary tract. In peripheral tissues, expressed at moderate levels in the eye, liver, kidney, pituitary gland, testis and thymus.

The protein localises to the cell membrane. Functionally, receptor for the orexigenic neuropeptide QRFP. The activity of this receptor is mediated by G proteins that modulate adenylate cyclase activity and intracellular calcium levels. This Mus musculus (Mouse) protein is Pyroglutamylated RF-amide peptide receptor (Qrfpr).